Reading from the N-terminus, the 100-residue chain is Co-chaperonin GroES (100 aa).

This sequence belongs to the GroES chaperonin family. In terms of assembly, heptamer of 7 subunits arranged in a ring. Interacts with the chaperonin GroEL.

It is found in the cytoplasm. Together with the chaperonin GroEL, plays an essential role in assisting protein folding. The GroEL-GroES system forms a nano-cage that allows encapsulation of the non-native substrate proteins and provides a physical environment optimized to promote and accelerate protein folding. GroES binds to the apical surface of the GroEL ring, thereby capping the opening of the GroEL channel. This Mycolicibacterium paratuberculosis (strain ATCC BAA-968 / K-10) (Mycobacterium paratuberculosis) protein is Co-chaperonin GroES.